The chain runs to 846 residues: Sucrose synthase 6 (846 aa).

Residues 276 to 755 (CVFTVVIFSI…GLQRIYECYT (480 aa)) are GT-B glycosyltransferase.

This sequence belongs to the glycosyltransferase 1 family. Plant sucrose synthase subfamily.

It catalyses the reaction an NDP-alpha-D-glucose + D-fructose = a ribonucleoside 5'-diphosphate + sucrose + H(+). In terms of biological role, sucrose-cleaving enzyme that provides UDP-glucose and fructose for various metabolic pathways. This chain is Sucrose synthase 6 (SUS6), found in Oryza sativa subsp. japonica (Rice).